A 679-amino-acid polypeptide reads, in one-letter code: Altered inheritance of mitochondria protein 21 (679 aa).

Positions 1–85 (MPSEVTPKVP…LQRPVRRSTT (85 aa)) are disordered. Basic and acidic residues predominate over residues 9 to 19 (VPERPSRRKTS). Phosphothreonine is present on T18. S36 carries the phosphoserine modification. At T58 the chain carries Phosphothreonine. S70 is subject to Phosphoserine. T85 carries the phosphothreonine modification. S104 carries the phosphoserine modification. Over residues 110–119 (NIHNVSRKKS) the composition is skewed to basic residues. Disordered regions lie at residues 110-522 (NIHN…EKIE), 549-580 (IDTT…PNKM), and 593-679 (EKLP…FHSL). Polar residues-rich tracts occupy residues 133-149 (QNGQ…TNPS) and 164-178 (SAIS…SNNE). Residues 179–213 (VTEHSDSEDLTEKQKVHAALDNEAGDRSHFEEKLI) are compositionally biased toward basic and acidic residues. 3 positions are modified to phosphoserine: S183, S206, and S231. Over residues 243 to 272 (SDDKAEKFTKHPESSLEELQKHQEQQEEKI) the composition is skewed to basic and acidic residues. Residue T277 is modified to Phosphothreonine. Residue S284 is modified to Phosphoserine. A compositionally biased stretch (polar residues) spans 296 to 323 (EVNSQPQGPSDTETVIAATSSNVPSQIA). S324 carries the post-translational modification Phosphoserine. 2 stretches are compositionally biased toward basic and acidic residues: residues 339-361 (KKDF…RVSE) and 372-383 (EESKIPKIPSER). The tract at residues 383–396 (RPKRRAPPPVPKKP) is interaction with SH3 domain of ABP1. Polar residues-rich tracts occupy residues 414–427 (DLHN…TTAS) and 437–452 (SSIT…TSKL). Residues 471–482 (LEKKLSSPDTES) are compositionally biased toward basic and acidic residues. Residues 501–512 (RRGRGPRGRKLP) show a composition bias toward basic residues. Position 552 is a phosphothreonine (T552). The segment covering 556–576 (QAERALDEKSKSIPEEQREQS) has biased composition (basic and acidic residues). S576 is subject to Phosphoserine. A compositionally biased stretch (polar residues) spans 603–613 (PLSQLPQTNAV). Phosphoserine occurs at positions 620, 623, 625, 627, 667, 671, 675, and 678. Residues 667 to 679 (SALHSEEASFHSL) show a composition bias toward basic and acidic residues.

It belongs to the AIM21 family. As to quaternary structure, interacts with ribosomes. Interacts with ABP1.

Its subcellular location is the cytoplasm. It is found in the cytoskeleton. It localises to the actin patch. Its function is as follows. Involved in mitochondrial migration along actin filaments. The polypeptide is Altered inheritance of mitochondria protein 21 (AIM21) (Saccharomyces cerevisiae (strain ATCC 204508 / S288c) (Baker's yeast)).